The sequence spans 92 residues: Acyl carrier protein (92 aa).

The Carrier domain maps to 1–84 (MPSTADERQL…QIAAHLAEAV (84 aa)). At serine 44 the chain carries O-(pantetheine 4'-phosphoryl)serine.

Belongs to the acyl carrier protein (ACP) family. 4'-phosphopantetheine is transferred from CoA to a specific serine of apo-ACP by AcpS. This modification is essential for activity because fatty acids are bound in thioester linkage to the sulfhydryl of the prosthetic group.

It is found in the cytoplasm. It participates in lipid metabolism; fatty acid biosynthesis. In terms of biological role, carrier of the growing fatty acid chain in fatty acid biosynthesis. This Streptomyces coelicolor (strain ATCC BAA-471 / A3(2) / M145) protein is Acyl carrier protein.